Consider the following 334-residue polypeptide: MTPLDAKRPLQLNHQGQLRHFLSLDGLPRELLTEILDTADSFLEVGARAVKKVPLLRGKTVCNVFFENSTRTRTTFELAAQRLSADVITLNVSTSSTSKGETLFDTLRNLEAMAADMFVVRHADSGAAHFIAEHVCPDVAIINGGDGRHAHPTQGMLDMLTIRRHKGGFENLSVAIVGDILHSRVARSNMLALQALGCPDIRVIGPKTLLPVGVEQYGVKVYTDLNEGLKDVDVVIMLRLQRERMTGGLLPSEGEFYRLFGLTTARLAAAKPDAIVMHPGPINRGVEIESAVADGAHSVILNQVTYGIAIRMAVLSMAMSGQNAQRQFEQENAQ.

Carbamoyl phosphate is bound by residues arginine 71 and threonine 72. Residue lysine 99 participates in L-aspartate binding. Carbamoyl phosphate contacts are provided by arginine 121, histidine 151, and glutamine 154. L-aspartate is bound by residues arginine 184 and arginine 239. 2 residues coordinate carbamoyl phosphate: glycine 280 and proline 281.

This sequence belongs to the aspartate/ornithine carbamoyltransferase superfamily. ATCase family. In terms of assembly, heterododecamer (2C3:3R2) of six catalytic PyrB chains organized as two trimers (C3), and six regulatory PyrI chains organized as three dimers (R2).

The enzyme catalyses carbamoyl phosphate + L-aspartate = N-carbamoyl-L-aspartate + phosphate + H(+). Its pathway is pyrimidine metabolism; UMP biosynthesis via de novo pathway; (S)-dihydroorotate from bicarbonate: step 2/3. Functionally, catalyzes the condensation of carbamoyl phosphate and aspartate to form carbamoyl aspartate and inorganic phosphate, the committed step in the de novo pyrimidine nucleotide biosynthesis pathway. This Pseudomonas savastanoi pv. phaseolicola (strain 1448A / Race 6) (Pseudomonas syringae pv. phaseolicola (strain 1448A / Race 6)) protein is Aspartate carbamoyltransferase catalytic subunit.